We begin with the raw amino-acid sequence, 160 residues long: SKP1-like protein 1A (160 aa).

The interaction with the F-box domain of F-box proteins stretch occupies residues 102 to 160 (ILAANYLNIKNLLDLTCQTVADMIKGKTPEEIRTTFNIKNDFTPEEEEEVRRENQWAFE).

Belongs to the SKP1 family. As to quaternary structure, part of a SCF E3 ubiquitin ligase complex composed of SKP1, CUL1, RBX1 (RBX1A or RBX1B) and F-box proteins. Interacts with SKIP1, SKIP2, SKIP3, SKIP4, SKIP6, FIB1/SKIP7, SKIP8, PP2A11/SKIP10, SKIP11, PP2B11/SKIP12, PP2A14/SKIP13, SKIP14, SKIP15, SKIP16, SKIP19/FBL20, SKIP20, PP2B1/SKIP21, SKIP22, SKIP23, SKIP24, SKIP25, TULP10/SKIP26, SKIP27, SKIP28/MEE11, AFR/SKIP29, SKIP30, SKIP31, SKIP32/FBP7, SKIP33, SKIP35, ADO1/ZTL, ADO2/LKP2, ADO3/FKF1, AFR, COI1, DOR, EBF1, EBF2, EID1, ORE9, PP2A13/SKIP9, TIR1, UFO, SKP2A, CPR1/CPR30, FBL17, NUP58, At1g55000, At1g67340, At1g78100, At3g04660, At3g61590, At4g38940 and At5g49610. The SKP1A subunit of the SCF E3 ubiquitin ligase complex can interact directly with KIN10, KIN11 and the proteasome subunit PAD1. This interaction can be disrupted by PRL1. In case of polerovirus infection, part of a SCF P0 complex composed of the viral silencing suppressor P0, SKP1 and CUL1. Interacts with turnip yellows virus P0. Interacts with VBF and Agrobacterium virF. Binds to KIB1. As to expression, accumulates only in meristematic cells. Expressed in inflorescence, shoot and root apical meristems, as well as in developing organs such as gametocytes and seeds. Also detected in cortical layer and epidermis of roots, leaves, pith and vascular bundle of young stem, young floral buds and organ primordia, pollen and through the valve of siliques. Not detectable in mature root tissues.

The protein resides in the nucleus. It localises to the cytoplasm. Its subcellular location is the cytoskeleton. It is found in the spindle. The protein localises to the phragmoplast. Its pathway is protein modification; protein ubiquitination. In terms of biological role, involved in ubiquitination and subsequent proteasomal degradation of target proteins. Together with CUL1, RBX1 and a F-box protein, it forms a SCF E3 ubiquitin ligase complex. The functional specificity of this complex depends on the type of F-box protein. In the SCF complex, it serves as an adapter that links the F-box protein to CUL1. SCF(UFO) is required for vegetative and floral organ development as well as for male gametogenesis. SCF(TIR1) is involved in auxin signaling pathway. SCF(COI1) regulates responses to jasmonates. SCF(EID1) and SCF(AFR) are implicated in phytochrome A light signaling. SCF(ADO1), SCF(ADO2), SCF(ADO3) are related to the circadian clock. SCF(ORE9) seems to be involved in senescence. SCF(EBF1/EBF2) may regulate ethylene signaling. Plays a role during embryogenesis and early postembryonic development, especially during cell elongation and division. Contributes to the correct chromosome segregation during tetrad formation. This Arabidopsis thaliana (Mouse-ear cress) protein is SKP1-like protein 1A.